We begin with the raw amino-acid sequence, 343 residues long: Dihydroorotase (343 aa).

The Zn(2+) site is built by histidine 13 and histidine 15. Substrate is bound by residues 15 to 17 (HLR) and asparagine 41. Zn(2+) is bound by residues lysine 99, histidine 136, and histidine 174. An N6-carboxylysine modification is found at lysine 99. Histidine 136 is a binding site for substrate. Leucine 219 is a binding site for substrate. Aspartate 247 contributes to the Zn(2+) binding site. The active site involves aspartate 247. Substrate is bound by residues histidine 251 and alanine 263.

It belongs to the metallo-dependent hydrolases superfamily. DHOase family. Class II DHOase subfamily. In terms of assembly, homodimer. Zn(2+) serves as cofactor.

It catalyses the reaction (S)-dihydroorotate + H2O = N-carbamoyl-L-aspartate + H(+). It participates in pyrimidine metabolism; UMP biosynthesis via de novo pathway; (S)-dihydroorotate from bicarbonate: step 3/3. Its function is as follows. Catalyzes the reversible cyclization of carbamoyl aspartate to dihydroorotate. This chain is Dihydroorotase, found in Shewanella baltica (strain OS155 / ATCC BAA-1091).